Consider the following 178-residue polypeptide: Large ribosomal subunit protein uL6 (178 aa).

This sequence belongs to the universal ribosomal protein uL6 family. In terms of assembly, part of the 50S ribosomal subunit.

Functionally, this protein binds to the 23S rRNA, and is important in its secondary structure. It is located near the subunit interface in the base of the L7/L12 stalk, and near the tRNA binding site of the peptidyltransferase center. The polypeptide is Large ribosomal subunit protein uL6 (Lactococcus lactis subsp. cremoris (strain MG1363)).